Here is a 302-residue protein sequence, read N- to C-terminus: Nucleotide-binding protein Strop_3101 (302 aa).

Residue Gly26 to Ser33 participates in ATP binding. Residue Asp77–Ser80 coordinates GTP.

It belongs to the RapZ-like family.

Displays ATPase and GTPase activities. This is Nucleotide-binding protein Strop_3101 from Salinispora tropica (strain ATCC BAA-916 / DSM 44818 / JCM 13857 / NBRC 105044 / CNB-440).